A 175-amino-acid polypeptide reads, in one-letter code: Ribosome maturation factor RimM (175 aa).

A PRC barrel domain is found at 96 to 172 (PDTYYDHQLE…LIEIDPPDGL (77 aa)).

This sequence belongs to the RimM family. Binds ribosomal protein uS19.

The protein resides in the cytoplasm. In terms of biological role, an accessory protein needed during the final step in the assembly of 30S ribosomal subunit, possibly for assembly of the head region. Essential for efficient processing of 16S rRNA. May be needed both before and after RbfA during the maturation of 16S rRNA. It has affinity for free ribosomal 30S subunits but not for 70S ribosomes. The protein is Ribosome maturation factor RimM of Mycobacterium avium (strain 104).